Here is a 666-residue protein sequence, read N- to C-terminus: ATP synthase subunit alpha 2 (666 aa).

Residue 182–189 (GDRATGKT) participates in ATP binding. The tract at residues 527-666 (MPAEDAAGDI…DAEAEARHKR (140 aa)) is disordered. A compositionally biased stretch (basic and acidic residues) spans 545-590 (ARGDADRDADHGANREVSREVSPEASREVSREVSCEVSHEADRDAA). Positions 591–601 (ADAARVAGRAP) are enriched in low complexity. Positions 623 to 641 (ADGDRASASRPRPDARGDA) are enriched in basic and acidic residues.

The protein belongs to the ATPase alpha/beta chains family. In terms of assembly, F-type ATPases have 2 components, CF(1) - the catalytic core - and CF(0) - the membrane proton channel. CF(1) has five subunits: alpha(3), beta(3), gamma(1), delta(1), epsilon(1). CF(0) has three main subunits: a(1), b(2) and c(9-12). The alpha and beta chains form an alternating ring which encloses part of the gamma chain. CF(1) is attached to CF(0) by a central stalk formed by the gamma and epsilon chains, while a peripheral stalk is formed by the delta and b chains.

It is found in the cell inner membrane. It catalyses the reaction ATP + H2O + 4 H(+)(in) = ADP + phosphate + 5 H(+)(out). Functionally, produces ATP from ADP in the presence of a proton gradient across the membrane. The alpha chain is a regulatory subunit. This Burkholderia pseudomallei (strain K96243) protein is ATP synthase subunit alpha 2.